The following is a 244-amino-acid chain: Securin-like protein (244 aa).

The segment at 31-53 is disordered; it reads ELEKTPSRGGLGLVVNSSKTPGG.

In terms of assembly, forms a complex (via C-terminus) with separase sep-1. Interaction with ify-1 stabilizes sep-1. Also maintains the complex in the cytoplasm during interphase and recruits it to chromosomes during the first meiotic division. Interacts with E3 ubiquitin-protein ligase etc-1. In terms of processing, ubiquitinated by etc-1 likely at the onset of anaphase, resulting in its degradation. As to expression, expressed in germ cells including oocytes.

Its subcellular location is the cytoplasm. It localises to the chromosome. It is found in the cytoskeleton. The protein resides in the spindle. In terms of biological role, acts as a chaperone and as an inhibitor for separase sep-1. Plays an essential role in maintaining chromosome cohesion prior to meiotic and mitotic anaphase, in cytokinesis and in organizing the spindle and the centrosome. Ubiquitination-dependent degradation at the onset of anaphase is likely to activate sep-1 resulting in the proteolysis of the cohesin complex and the subsequent segregation of the chromosomes. Also required for cortical granule exocytosis. The chain is Securin-like protein from Caenorhabditis elegans.